Consider the following 232-residue polypeptide: Glycerol-3-phosphate acyltransferase 4 (232 aa).

Helical transmembrane passes span 4 to 24 (VFLI…AYLL), 54 to 76 (LGLA…AGWL), 80 to 99 (LWQQ…WPVF), 107 to 127 (GIAT…LIAL), 143 to 163 (VFLG…FFGV), and 168 to 188 (TVTW…LMAP).

The protein belongs to the PlsY family. In terms of assembly, probably interacts with PlsX.

The protein resides in the cell membrane. It catalyses the reaction an acyl phosphate + sn-glycerol 3-phosphate = a 1-acyl-sn-glycero-3-phosphate + phosphate. It functions in the pathway lipid metabolism; phospholipid metabolism. Functionally, catalyzes the transfer of an acyl group from acyl-phosphate (acyl-PO(4)) to glycerol-3-phosphate (G3P) to form lysophosphatidic acid (LPA). This enzyme utilizes acyl-phosphate as fatty acyl donor, but not acyl-CoA or acyl-ACP. This Dehalococcoides mccartyi (strain CBDB1) protein is Glycerol-3-phosphate acyltransferase 4.